Consider the following 561-residue polypeptide: Sesquiterpene synthase 2 (561 aa).

Residues aspartate 313, aspartate 317, aspartate 458, and glutamate 466 each coordinate Mg(2+). A DDXXD motif motif is present at residues 313–317 (DDIYD).

It belongs to the terpene synthase family. Tpsa subfamily. Mn(2+) is required as a cofactor. Mg(2+) serves as cofactor.

The protein localises to the cytoplasm. The enzyme catalyses (2E,6E)-farnesyl diphosphate + H2O = kunzeaol + diphosphate. It participates in secondary metabolite biosynthesis; terpenoid biosynthesis. Involved in the biosynthesis of kunzeaol. Produces mainly (-)-germacrene D along with gamma-cadinene. The polypeptide is Sesquiterpene synthase 2 (STS2) (Thapsia garganica (Deadly carrot)).